Here is a 276-residue protein sequence, read N- to C-terminus: UPF0328 protein ECU08_2080 (276 aa).

The segment at 1–24 (MGIIDVQRSHLTATPSKERDAPAH) is disordered.

This sequence belongs to the UPF0328 family.

The chain is UPF0328 protein ECU08_2080 from Encephalitozoon cuniculi (strain GB-M1) (Microsporidian parasite).